Reading from the N-terminus, the 149-residue chain is Aspartate 1-decarboxylase (149 aa).

The active-site Schiff-base intermediate with substrate; via pyruvic acid is Ser-25. Pyruvic acid (Ser) is present on Ser-25. Thr-57 provides a ligand contact to substrate. The Proton donor role is filled by Tyr-58. Position 73–75 (73–75 (GAA)) interacts with substrate. The interval 119 to 149 (GDPAAALPGDPSSLRGDVLDPAGARGLGGGA) is disordered.

The protein belongs to the PanD family. Heterooctamer of four alpha and four beta subunits. It depends on pyruvate as a cofactor. Post-translationally, is synthesized initially as an inactive proenzyme, which is activated by self-cleavage at a specific serine bond to produce a beta-subunit with a hydroxyl group at its C-terminus and an alpha-subunit with a pyruvoyl group at its N-terminus.

The protein resides in the cytoplasm. It catalyses the reaction L-aspartate + H(+) = beta-alanine + CO2. It functions in the pathway cofactor biosynthesis; (R)-pantothenate biosynthesis; beta-alanine from L-aspartate: step 1/1. Functionally, catalyzes the pyruvoyl-dependent decarboxylation of aspartate to produce beta-alanine. In Parafrankia sp. (strain EAN1pec), this protein is Aspartate 1-decarboxylase.